The sequence spans 427 residues: UDP-N-acetyl-D-mannosamine dehydrogenase (427 aa).

Positions 19, 20, 39, 44, 91, and 130 each coordinate NAD(+). UDP-N-acetyl-alpha-D-mannosaminouronate is bound by residues arginine 155, valine 156, lysine 207, asparagine 211, arginine 214, histidine 245, arginine 247, and glycine 258. Lysine 207 acts as the Proton donor/acceptor in catalysis. Cysteine 261 acts as the Nucleophile in catalysis. Tyrosine 318 and lysine 319 together coordinate UDP-N-acetyl-alpha-D-mannosaminouronate. Residue arginine 326 participates in NAD(+) binding. Residue lysine 404 participates in UDP-N-acetyl-alpha-D-mannosaminouronate binding.

Belongs to the UDP-glucose/GDP-mannose dehydrogenase family. In terms of assembly, homotetramer; probably dimer of dimers.

It catalyses the reaction UDP-N-acetyl-alpha-D-mannosamine + 2 NAD(+) + H2O = UDP-N-acetyl-alpha-D-mannosaminouronate + 2 NADH + 3 H(+). Catalyzes the four-electron oxidation of UDP-N-acetyl-D-mannosamine (UDP-ManNAc), reducing NAD(+) and releasing UDP-N-acetylmannosaminuronic acid (UDP-ManNAcA). Cannot use NADP instead of NAD. This is UDP-N-acetyl-D-mannosamine dehydrogenase (wecC) from Methanococcus maripaludis (strain DSM 14266 / JCM 13030 / NBRC 101832 / S2 / LL).